Here is a 337-residue protein sequence, read N- to C-terminus: 2-oxoglutarate-dependent dioxygenase frbA (337 aa).

Positions Cys-175–Pro-290 constitute a Fe2OG dioxygenase domain. Fe cation-binding residues include His-202, Asp-204, and His-262. A 2-oxoglutarate-binding site is contributed by Arg-281.

It belongs to the iron/ascorbate-dependent oxidoreductase family. Fe(2+) serves as cofactor.

The protein operates within antifungal biosynthesis. Functionally, 2-oxoglutarate-dependent dioxygenase; part of the gene cluster that mediates the biosynthesis of the antifungal antibiotic FR901469, an inhibitor of beta-1,3-glucansynthase, exerting antifungal activity against the pathogenes Candida albicans and Aspergillus fumigatus. FR901469 is a cyclic depsipeptide containing 12 amino acid residues and a fatty acid chain. The NRPS frbI contains 12 modules responsible for the formation of the depsipeptide backbone which is denoted as Acyl-Thr-Ala-Tyr-Val-4OHPro-Thr-Thr-3OHPro-threo3OHGln-Gly-Thr-Orn-OH (C71H116N14O23). The PKS frbB is probably involved in the production of the hydrocarbon chain, and the acyl-CoA ligase frbC might be involved in the transport of the chain to the peptide ptoduct of frbI. Because FR901469 contains 3 hydroxylated amino acid residues, the 3 oxygenases frbA, frbH, and frbJ might be participating in amino acid hydroxylation. As no thioesterase domains were detected in frbI or frbB, the thioesterases frbD and frbE may instead release and cyclize the products of the NRPS and PKS, respectively. This chain is 2-oxoglutarate-dependent dioxygenase frbA, found in Dothideomycetidae sp. (strain 11243) (Fungal sp. (strain No.11243)).